Here is a 246-residue protein sequence, read N- to C-terminus: Probable transcriptional regulatory protein SPO1072 (246 aa).

Residues 1–22 form a disordered region; it reads MAGHSKWANIQHRKGRQDAARS.

The protein belongs to the TACO1 family.

The protein resides in the cytoplasm. The protein is Probable transcriptional regulatory protein SPO1072 of Ruegeria pomeroyi (strain ATCC 700808 / DSM 15171 / DSS-3) (Silicibacter pomeroyi).